The sequence spans 134 residues: Cytochrome b5 (134 aa).

One can recognise a Cytochrome b5 heme-binding domain in the interval 6-82 (VKYFTRAEVA…MKQYKVGELV (77 aa)). Residues His41 and His65 each coordinate heme. The helical transmembrane segment at 111–131 (WLMPFVLGLVATLIYKFFFGT) threads the bilayer.

This sequence belongs to the cytochrome b5 family.

It is found in the endoplasmic reticulum membrane. The protein resides in the microsome membrane. Cytochrome b5 is a membrane bound hemoprotein which function as an electron carrier for several membrane bound oxygenases. The polypeptide is Cytochrome b5 (Cyt-b5) (Musca domestica (House fly)).